We begin with the raw amino-acid sequence, 937 residues long: MSSRPELKVDDEHGFIRFYKSLPQLGEEAIRIFDRGDWYTAHGDDATFIARTVYKTTSVIRQLGRSDHTGLPSVTMTVTVFRQFLREALFKLGKRIEIWASPSGRMNWKVVKQASPGNLQDVEDELGGQFEGAPVILAVKISAKASEARTVGVCFADASVRELGVSEFLDNDLYSNFEALLIQLGVKECIVTQDKGEKEKDPELAKLRQIIDNCGVAIAERSAGEFGTKDIEQDLSRLLKDERAASLLPQTDLKLAMGSASALIKYLGILHDPSNFGQYQLYQHDLAQFMKLDAAALKALNLMPGARDGAKNMSLYGLLNHCKTPVGSRLLSQWLKQPLMNAEEIEKRQQLVEAFANDTELRQSMQEEHLRSIPDLYRLSKRFQRGKATLEDVVRAYQVVIRLPGFIGTLEGVMDEAYRDPLDEVYTNKLRELSDSLVKLQEMVETTVDLDALDNHEFIIKPEFDDSLRIIRKKLDRLRTDMDNEFAEAAEDLGQEREKKIFLENHKVHGWCMRLTRTEAGCIRNNSRYLECSTQKNGVYFTTKTLQALRREFDQLSQNYNRTQSSLVNEVVGVAASYCPVLERLAAVLAHLDVIVSFAHCSVHAPISYVRPKIHPRGTGRTVLTEARHPCMEVQDDVTFITNDVTLTREDSSFLIITGPNMGGKSTYIRQIGVIALMAQIGCFVPCSSAELTIFDSILARVGASDSQLKGVSTFMAEMLETANILKSATAESLIIIDELGRGTSTYDGFGLAWAISEHIVKEIGCFALFATHFHELTALADQYPNVKNLHVTAHISGTDTDTDVITDEDEKAKKKREVTLLYKVEPGICDQSFGIHVAELVRFPDKVVRMAKRKADELEDFTSKHEEENGGGLGVQYSKQDVEEGSALLKDVLVKWKDEVKSGRMSKEEMVARLKELVQKDERLLGNPFFKSVQAL.

ATP is bound at residue G659–S666.

It belongs to the DNA mismatch repair MutS family. Heterodimer of msh2 and msh6.

Its subcellular location is the nucleus. In terms of biological role, involved in post-replicative DNA-mismatch repair. Binds to mismatch-containing DNA. The polypeptide is DNA mismatch repair protein msh-2 (msh-2) (Neurospora crassa (strain ATCC 24698 / 74-OR23-1A / CBS 708.71 / DSM 1257 / FGSC 987)).